The following is a 117-amino-acid chain: uncharacterized protein (117 aa).

Residues Leu-57 to Val-77 form a helical membrane-spanning segment.

It is found in the membrane. This is an uncharacterized protein from Schizosaccharomyces pombe (strain 972 / ATCC 24843) (Fission yeast).